The sequence spans 368 residues: uncharacterized protein (368 aa).

A Response regulatory domain is found at 3–120 (KILLADDERI…QIISSLEEII (118 aa)). Aspartate 55 is subject to 4-aspartylphosphate. The 103-residue stretch at 259–361 (SKMIRLIADE…GLTPSEFRRK (103 aa)) folds into the HTH araC/xylS-type domain. 2 DNA-binding regions (H-T-H motif) span residues 278–299 (WAAK…KQET) and 327–351 (VSEI…KKYT).

In terms of processing, phosphorylated by YesM.

The protein localises to the cytoplasm. Its function is as follows. Member of the two-component regulatory system YesM/YesN. This is an uncharacterized protein from Bacillus subtilis (strain 168).